We begin with the raw amino-acid sequence, 255 residues long: Large ribosomal subunit protein uL2 (255 aa).

A disordered region spans residues 211–235; the sequence is PHGGGNHQHVGHATTTKRDDPAGKK.

Belongs to the universal ribosomal protein uL2 family.

The chain is Large ribosomal subunit protein uL2 (rpl8) from Dictyostelium discoideum (Social amoeba).